Consider the following 714-residue polypeptide: Fatty acid oxidation complex subunit alpha (714 aa).

The tract at residues 1 to 190 (MDTVSAFKLE…KAGLVDEVVP (190 aa)) is enoyl-CoA hydratase. Residues 306–714 (GPLTSIAVLG…TFWPADERLT (409 aa)) form a 3-hydroxyacyl-CoA dehydrogenase region.

It in the N-terminal section; belongs to the enoyl-CoA hydratase/isomerase family. In the central section; belongs to the 3-hydroxyacyl-CoA dehydrogenase family. In terms of assembly, heterotetramer of two alpha chains (FadJ) and two beta chains (FadI).

The protein resides in the cytoplasm. It carries out the reaction a (3S)-3-hydroxyacyl-CoA = a (2E)-enoyl-CoA + H2O. The catalysed reaction is a 4-saturated-(3S)-3-hydroxyacyl-CoA = a (3E)-enoyl-CoA + H2O. The enzyme catalyses a (3S)-3-hydroxyacyl-CoA + NAD(+) = a 3-oxoacyl-CoA + NADH + H(+). It catalyses the reaction (3S)-3-hydroxybutanoyl-CoA = (3R)-3-hydroxybutanoyl-CoA. Its pathway is lipid metabolism; fatty acid beta-oxidation. Its function is as follows. Catalyzes the formation of a hydroxyacyl-CoA by addition of water on enoyl-CoA. Also exhibits 3-hydroxyacyl-CoA epimerase and 3-hydroxyacyl-CoA dehydrogenase activities. This Klebsiella pneumoniae (strain 342) protein is Fatty acid oxidation complex subunit alpha.